We begin with the raw amino-acid sequence, 365 residues long: MAGNVFGQMFRITTWGESHGKAVGVVVDGLPAGLPFSEADIQKELDRRRPGQSEVSTPRHEADRVEILSGIFEGMSTGTPVSMLVWNSDARSSAYDVIKDTPRPGHADFTYMARYGMRDHRGGGRSSARETIGRVAGGALAKLLLSRFGILIAGHVLELGALRAKPLSFEEILENVEKTPVRCADLEAAEKMLEKVAALRQEGDSIGGIVELIIRGVPAGLGEPVFDRLDADLAKALMSIPAVKGFEIGAGFEAARLYGSEMNDPFRIKEGKITTSSNNAGGILGGISTGLDIVCRAAVKPTPSIGKVQQTVDLKTLENTEIAIKGRHDPTIPPRMVPVAEAMVALVIADHMLRSGFINPRTLLE.

Residues 41 to 61 (IQKELDRRRPGQSEVSTPRHE) form a disordered region. Arginine 48 lines the NADP(+) pocket. FMN contacts are provided by residues 125-127 (RSS), glycine 285, 300-304 (KPTPS), and arginine 327.

This sequence belongs to the chorismate synthase family. The cofactor is FMNH2.

It carries out the reaction 5-O-(1-carboxyvinyl)-3-phosphoshikimate = chorismate + phosphate. Its pathway is metabolic intermediate biosynthesis; chorismate biosynthesis; chorismate from D-erythrose 4-phosphate and phosphoenolpyruvate: step 7/7. Functionally, catalyzes the anti-1,4-elimination of the C-3 phosphate and the C-6 proR hydrogen from 5-enolpyruvylshikimate-3-phosphate (EPSP) to yield chorismate, which is the branch point compound that serves as the starting substrate for the three terminal pathways of aromatic amino acid biosynthesis. This reaction introduces a second double bond into the aromatic ring system. This is Chorismate synthase from Methanosarcina barkeri (strain Fusaro / DSM 804).